We begin with the raw amino-acid sequence, 498 residues long: Interferon regulatory factor 5 (498 aa).

Thr-10 carries the phosphothreonine modification. A Nuclear localization signal motif is present at residues Pro-12–Lys-18. Residues Arg-14 to Ser-122 constitute a DNA-binding region (IRF tryptophan pentad repeat). The segment at Cys-121–Pro-207 is disordered. The Nuclear export signal motif lies at Leu-150 to Thr-160. Position 158 is a phosphoserine; by TBK1 (Ser-158). The segment covering Thr-168–Asn-206 has biased composition (pro residues). Ser-293 carries the phosphoserine; by TBK1 modification. Ser-301 carries the phosphoserine modification. Residues Lys-411 and Lys-412 each participate in a glycyl lysine isopeptide (Lys-Gly) (interchain with G-Cter in ubiquitin) cross-link. A phosphoserine mark is found at Ser-431, Ser-435, Ser-437, and Ser-440. Ser-446 bears the Phosphoserine; by IKKB mark. A disordered region spans residues Pro-478–Gln-498.

It belongs to the IRF family. In terms of assembly, homodimer, when phosphorylated. Interacts with TASL (via pLxIS motif); interaction takes place downstream of TLR7, TLR8 or TLR9, leading to its activation. Interacts with MYD88 and TRAF6. Phosphorylation of serine and threonine residues by IKBKB in a C-terminal autoinhibitory region, stimulates dimerization, transport into the nucleus, assembly with the coactivator CBP/EP300 and initiation of transcription. Post-translationally, 'Lys-63'-linked polyubiquitination by TRAF6 is required for activation.

The protein resides in the cytoplasm. It is found in the nucleus. Its activity is regulated as follows. Maintained as a monomer in an autoinhibited state. Phosphorylation and activation follow the following steps: innate adapter protein TASL recruits IRF5, thereby licensing IRF5 for phosphorylation by IKBKB. Phosphorylated IRF5 dissociates from the adapter proteins, dimerizes, and then enters the nucleus to induce IFNs. With respect to regulation, (Microbial infection) Activated upon coronavirus SARS-CoV-2 infection. Its function is as follows. Transcription factor that plays a critical role in innate immunity by activating expression of type I interferon (IFN) IFNA and INFB and inflammatory cytokines downstream of endolysosomal toll-like receptors TLR7, TLR8 and TLR9. Regulates the transcription of type I IFN genes (IFN-alpha and IFN-beta) and IFN-stimulated genes (ISG) by binding to an interferon-stimulated response element (ISRE) in their promoters. Can efficiently activate both the IFN-beta (IFNB) and the IFN-alpha (IFNA) genes and mediate their induction downstream of the TLR-activated, MyD88-dependent pathway. Key transcription factor regulating the IFN response during SARS-CoV-2 infection. The sequence is that of Interferon regulatory factor 5 from Homo sapiens (Human).